A 132-amino-acid polypeptide reads, in one-letter code: Cytidine deaminase (132 aa).

The CMP/dCMP-type deaminase domain maps to 1 to 128 (MDRQMLIKEA…ELLPGAFTAE (128 aa)). 42–44 (NIE) serves as a coordination point for substrate. Zn(2+) is bound at residue C53. E55 functions as the Proton donor in the catalytic mechanism. Residues C86 and C89 each contribute to the Zn(2+) site.

Belongs to the cytidine and deoxycytidylate deaminase family. Requires Zn(2+) as cofactor.

It catalyses the reaction cytidine + H2O + H(+) = uridine + NH4(+). The catalysed reaction is 2'-deoxycytidine + H2O + H(+) = 2'-deoxyuridine + NH4(+). In terms of biological role, this enzyme scavenges exogenous and endogenous cytidine and 2'-deoxycytidine for UMP synthesis. The protein is Cytidine deaminase (cdd) of Halalkalibacterium halodurans (strain ATCC BAA-125 / DSM 18197 / FERM 7344 / JCM 9153 / C-125) (Bacillus halodurans).